A 405-amino-acid polypeptide reads, in one-letter code: BRCA1-A complex subunit Abraxas 1 (405 aa).

Residues 7-154 (LGVLSGFVLG…CTHCLEHGLY (148 aa)) enclose the MPN domain. Position 48 is a phosphoserine (serine 48). Positions 208-262 (SLKEVRKINEMYAAIQEELKTICQKVEQSEREVEKLLMDVNRLKEVRKKQQAQAK) form a coiled coil. Residues 333-405 (ASPAPAAPLS…DTDYPRSPTF (73 aa)) form a disordered region. Phosphoserine occurs at positions 382, 383, 392, and 402. A compositionally biased stretch (acidic residues) spans 386–397 (IDTEVGSPEDDT). The pSXXF motif signature appears at 402 to 405 (SPTF).

The protein belongs to the FAM175 family. Abraxas subfamily. In terms of assembly, component of the ARISC complex, at least composed of UIMC1/RAP80, ABRAXAS1, BRCC3/BRCC36, BABAM2 and BABAM1/NBA1. Component of the BRCA1-A complex, at least composed of the BRCA1, BARD1, UIMC1/RAP80, ABRAXAS1, BRCC3/BRCC36, BABAM2 and BABAM1/NBA1. In the complex, interacts directly with UIMC1/RAP80, BRCC3/BRCC36 and BABAM2. Homodimer. Interacts directly (when phosphorylated at Ser-402) with BRCA1. The phosphorylated homodimer can interact directly with two BRCA1 chains, giving rise to a heterotetramer. Binds polyubiquitin. Phosphorylation of Ser-402 of the pSXXF motif by ATM or ATR constitutes a specific recognition motif for the BRCT domain of BRCA1.

It localises to the nucleus. Involved in DNA damage response and double-strand break (DSB) repair. Component of the BRCA1-A complex, acting as a central scaffold protein that assembles the various components of the complex and mediates the recruitment of BRCA1. The BRCA1-A complex specifically recognizes 'Lys-63'-linked ubiquitinated histones H2A and H2AX at DNA lesion sites, leading to target the BRCA1-BARD1 heterodimer to sites of DNA damage at DSBs. This complex also possesses deubiquitinase activity that specifically removes 'Lys-63'-linked ubiquitin on histones H2A and H2AX. This is BRCA1-A complex subunit Abraxas 1 from Rattus norvegicus (Rat).